Here is a 137-residue protein sequence, read N- to C-terminus: Small ribosomal subunit protein uS9 (137 aa).

It belongs to the universal ribosomal protein uS9 family.

This chain is Small ribosomal subunit protein uS9 (rps9), found in Saccharolobus solfataricus (strain ATCC 35092 / DSM 1617 / JCM 11322 / P2) (Sulfolobus solfataricus).